We begin with the raw amino-acid sequence, 241 residues long: Probable 2-phosphosulfolactate phosphatase (241 aa).

This sequence belongs to the ComB family. It depends on Mg(2+) as a cofactor.

It catalyses the reaction (2R)-O-phospho-3-sulfolactate + H2O = (2R)-3-sulfolactate + phosphate. This Deinococcus geothermalis (strain DSM 11300 / CIP 105573 / AG-3a) protein is Probable 2-phosphosulfolactate phosphatase.